The following is a 549-amino-acid chain: Lipase 4 (549 aa).

The signal sequence occupies residues 1-15 (MKLALVLSLIVSVAA). Cysteine 75 and cysteine 112 are joined by a disulfide. Catalysis depends on serine 224, which acts as the Acyl-ester intermediate. An intrachain disulfide couples cysteine 283 to cysteine 292. Glutamate 356 functions as the Charge relay system in the catalytic mechanism. The N-linked (GlcNAc...) asparagine glycan is linked to asparagine 366. The active-site Charge relay system is the histidine 464.

This sequence belongs to the type-B carboxylesterase/lipase family.

The enzyme catalyses a triacylglycerol + H2O = a diacylglycerol + a fatty acid + H(+). The sequence is that of Lipase 4 (LIP4) from Diutina rugosa (Yeast).